The primary structure comprises 413 residues: Multifunctional CCA protein (413 aa).

Positions 8 and 11 each coordinate ATP. CTP is bound by residues Gly8 and Arg11. 2 residues coordinate Mg(2+): Asp21 and Asp23. ATP is bound by residues Arg91, Arg143, and Arg146. Positions 91, 143, and 146 each coordinate CTP. The HD domain occupies 232–333; it reads TGVHVMMVVD…VRFFERSDAL (102 aa).

Belongs to the tRNA nucleotidyltransferase/poly(A) polymerase family. Bacterial CCA-adding enzyme type 1 subfamily. As to quaternary structure, monomer. Can also form homodimers and oligomers. Mg(2+) serves as cofactor. Ni(2+) is required as a cofactor.

It catalyses the reaction a tRNA precursor + 2 CTP + ATP = a tRNA with a 3' CCA end + 3 diphosphate. The catalysed reaction is a tRNA with a 3' CCA end + 2 CTP + ATP = a tRNA with a 3' CCACCA end + 3 diphosphate. Catalyzes the addition and repair of the essential 3'-terminal CCA sequence in tRNAs without using a nucleic acid template. Adds these three nucleotides in the order of C, C, and A to the tRNA nucleotide-73, using CTP and ATP as substrates and producing inorganic pyrophosphate. tRNA 3'-terminal CCA addition is required both for tRNA processing and repair. Also involved in tRNA surveillance by mediating tandem CCA addition to generate a CCACCA at the 3' terminus of unstable tRNAs. While stable tRNAs receive only 3'-terminal CCA, unstable tRNAs are marked with CCACCA and rapidly degraded. This is Multifunctional CCA protein from Burkholderia ambifaria (strain ATCC BAA-244 / DSM 16087 / CCUG 44356 / LMG 19182 / AMMD) (Burkholderia cepacia (strain AMMD)).